The sequence spans 170 residues: Adenine phosphoribosyltransferase (170 aa).

It belongs to the purine/pyrimidine phosphoribosyltransferase family. As to quaternary structure, homodimer.

It is found in the cytoplasm. The catalysed reaction is AMP + diphosphate = 5-phospho-alpha-D-ribose 1-diphosphate + adenine. It functions in the pathway purine metabolism; AMP biosynthesis via salvage pathway; AMP from adenine: step 1/1. In terms of biological role, catalyzes a salvage reaction resulting in the formation of AMP, that is energically less costly than de novo synthesis. This Acholeplasma laidlawii (strain PG-8A) protein is Adenine phosphoribosyltransferase.